A 582-amino-acid chain; its full sequence is TRAF-type zinc finger domain-containing protein 1 (582 aa).

The residue at position 2 (A2) is an N-acetylalanine. The segment at 27 to 103 (IHEIHCQRNI…DLELSILKLK (77 aa)) adopts a TRAF-type zinc-finger fold. Phosphoserine is present on S191. The interval 216 to 238 (EEQERQERNRGQQPPKEGGEDGA) is disordered. S278, S320, S326, S327, S409, S415, S430, and S470 each carry phosphoserine. Disordered stretches follow at residues 402 to 509 (EGIP…IAPG) and 522 to 582 (PENI…EEEE). Composition is skewed to polar residues over residues 454-471 (PFNN…STSG) and 486-504 (LNNS…SQNG).

As to quaternary structure, interacts with MAVS, TICAM1, TRAF1, TRAF2, TRAF3 and TRAF6.

Its function is as follows. Negative feedback regulator that controls excessive innate immune responses. Regulates both Toll-like receptor 4 (TLR4) and DDX58/RIG1-like helicases (RLH) pathways. May inhibit the LTR pathway by direct interaction with TRAF6 and attenuation of NF-kappa-B activation. May negatively regulate the RLH pathway downstream from MAVS and upstream of NF-kappa-B and IRF3. The polypeptide is TRAF-type zinc finger domain-containing protein 1 (TRAFD1) (Macaca fascicularis (Crab-eating macaque)).